The primary structure comprises 464 residues: 3-isopropylmalate dehydratase large subunit (464 aa).

3 residues coordinate [4Fe-4S] cluster: cysteine 337, cysteine 397, and cysteine 400.

It belongs to the aconitase/IPM isomerase family. LeuC type 1 subfamily. Heterodimer of LeuC and LeuD. Requires [4Fe-4S] cluster as cofactor.

The catalysed reaction is (2R,3S)-3-isopropylmalate = (2S)-2-isopropylmalate. Its pathway is amino-acid biosynthesis; L-leucine biosynthesis; L-leucine from 3-methyl-2-oxobutanoate: step 2/4. Functionally, catalyzes the isomerization between 2-isopropylmalate and 3-isopropylmalate, via the formation of 2-isopropylmaleate. The protein is 3-isopropylmalate dehydratase large subunit of Bacillus thuringiensis subsp. konkukian (strain 97-27).